The primary structure comprises 184 residues: Photosystem I assembly protein Ycf4 (184 aa).

The next 2 helical transmembrane spans lie at 22–42 and 57–77; these read FGWA…GASS and IVFF…LFIS.

The protein belongs to the Ycf4 family.

It is found in the plastid. The protein resides in the chloroplast thylakoid membrane. Seems to be required for the assembly of the photosystem I complex. This is Photosystem I assembly protein Ycf4 from Acorus calamus (Sweet flag).